The primary structure comprises 417 residues: Fructose-1,6-bisphosphatase 1, chloroplastic (417 aa).

Residues 1 to 59 (MAATAATTTSSHLLLSSSRHVASSSQPSILSPRSLFSNNGKRAPTGVRNHQYASGVRCM) constitute a chloroplast transit peptide. The segment covering 24–35 (SSQPSILSPRSL) has biased composition (low complexity). Residues 24-48 (SSQPSILSPRSLFSNNGKRAPTGVR) are disordered. An N-acetylalanine modification is found at Ala60. Residues Glu138, Glu167, Asp188, Leu190, and Asp191 each contribute to the Mg(2+) site. Residue 191-194 (DGSS) participates in substrate binding. Cys233 and Cys238 are joined by a disulfide. 5 residues coordinate substrate: Asn297, Tyr329, Tyr347, Tyr349, and Lys359. Glu365 contributes to the Mg(2+) binding site.

The protein belongs to the FBPase class 1 family. In terms of assembly, homotetramer. Requires Mg(2+) as cofactor.

The protein resides in the plastid. It is found in the chloroplast stroma. It catalyses the reaction beta-D-fructose 1,6-bisphosphate + H2O = beta-D-fructose 6-phosphate + phosphate. It participates in carbohydrate biosynthesis; Calvin cycle. Its function is as follows. Catalyzes the irreversible reaction from fructose-1,6-bisphosphate to fructose-6-phosphate and inorganic phosphate, to regenerate the primary CO(2) acceptor molecule, ribulose-1,5-bisphosphate. Involved in the regulation of photosynthetic electron flow and sucrose synthesis. Its activity is critical for normal plant development and important for the regulation of a wide range of metabolic processes. The sequence is that of Fructose-1,6-bisphosphatase 1, chloroplastic from Arabidopsis thaliana (Mouse-ear cress).